The sequence spans 560 residues: Zinc finger protein 250 (560 aa).

The KRAB domain maps to 22 to 93; sequence LTFEDVAVLL…DRKGAKKSQG (72 aa). Glycyl lysine isopeptide (Lys-Gly) (interchain with G-Cter in SUMO2) cross-links involve residues Lys-125, Lys-136, Lys-148, and Lys-162. Residues 199 to 221 form a C2H2-type 1 zinc finger; sequence YMCVECGKCFGRSSHLLQHQRIH. Residue Lys-225 forms a Glycyl lysine isopeptide (Lys-Gly) (interchain with G-Cter in SUMO2) linkage. 7 consecutive C2H2-type zinc fingers follow at residues 227–249, 255–277, 283–305, 311–333, 339–361, 367–389, and 395–417; these read YVCS…RRIH, YECN…HKIH, HECL…QRIH, YVCP…QRVH, HRCN…QRIH, YTCS…HNVH, and YECS…ERIH. A Glycyl lysine isopeptide (Lys-Gly) (interchain with G-Cter in SUMO2) cross-link involves residue Lys-421. 5 consecutive C2H2-type zinc fingers follow at residues 423 to 445, 451 to 473, 479 to 501, 507 to 529, and 535 to 557; these read YACY…QRVH, YVCG…ERIH, FQCT…LRTH, YECN…QRIH, and YECG…QKVH.

The protein belongs to the krueppel C2H2-type zinc-finger protein family.

It is found in the nucleus. Functionally, may be involved in transcriptional regulation. This Homo sapiens (Human) protein is Zinc finger protein 250 (ZNF250).